A 557-amino-acid chain; its full sequence is Formate--tetrahydrofolate ligase (557 aa).

ATP is bound at residue 67–74 (TPAGEGKT).

This sequence belongs to the formate--tetrahydrofolate ligase family.

It catalyses the reaction (6S)-5,6,7,8-tetrahydrofolate + formate + ATP = (6R)-10-formyltetrahydrofolate + ADP + phosphate. It functions in the pathway one-carbon metabolism; tetrahydrofolate interconversion. The protein is Formate--tetrahydrofolate ligase of Cereibacter sphaeroides (strain ATCC 17029 / ATH 2.4.9) (Rhodobacter sphaeroides).